The sequence spans 270 residues: uncharacterized protein (270 aa).

The first 23 residues, 1-23, serve as a signal peptide directing secretion; that stretch reads MKKLLIILAATLVLVLGSSGNFR.

This is an uncharacterized protein from Archaeoglobus fulgidus (strain ATCC 49558 / DSM 4304 / JCM 9628 / NBRC 100126 / VC-16).